Here is a 1143-residue protein sequence, read N- to C-terminus: Disease resistance protein Piks-1 (1143 aa).

The tract at residues 1-190 is structured coiled coil (CC) domain; that stretch reads MEAAAMAVTA…PLRIMGGEMQ (190 aa). In terms of domain architecture, HMA spans 189–258; that stretch reads MQKIVFKIPM…KVGPAMFLEV (70 aa). The HMA-like domain stretch occupies residues 191–264; the sequence is KIVFKIPMVD…FLEVSQAKED (74 aa). Residues 282 to 570 form the NB-ARC domain; sequence HEVKTICILG…WIAEGFVSEE (289 aa). LRR repeat units follow at residues 681–706, 708–731, 732–754, 756–777, 778–800, 802–823, 824–848, 945–968, 979–1002, and 1004–1027; these read FKRLRVLDLEDNKDIQDSHLQGICEQ, SLRVRYLGLKGTRIRKLPQEMRKL, KHLEILYVGSTRISELPQEIGEL, HLRILDVRNTDITELPLQIREL, QHLHTLDVRNTPISELPPQVGKL, NLKIMCVRSTGVRELPKEIGEL, NHLQTLDVRNTRVRELPWQAGQISQ, MPNLQTLVLRFEALPRQPITINGT, DSRVPRIAFHEDAMPNLKLLEFKF, and AGPASNDAIGITNLKSLQKVVFRC.

It belongs to the disease resistance NB-LRR family. In terms of assembly, interacts with AVR-Pik through its N-terminal part containing the HMA-like domain.

Functionally, disease resistance (R) protein that specifically recognizes the AVR-Pik effector avirulence protein from M.oryzae. Resistance proteins guard the plant against pathogens that contain an appropriate avirulence protein via an indirect interaction with this avirulence protein. That triggers a defense system including the hypersensitive response, which restricts the pathogen growth. The polypeptide is Disease resistance protein Piks-1 (Oryza sativa subsp. japonica (Rice)).